A 252-amino-acid chain; its full sequence is 2-succinyl-6-hydroxy-2,4-cyclohexadiene-1-carboxylate synthase (252 aa).

The protein belongs to the AB hydrolase superfamily. MenH family. Monomer.

The enzyme catalyses 5-enolpyruvoyl-6-hydroxy-2-succinyl-cyclohex-3-ene-1-carboxylate = (1R,6R)-6-hydroxy-2-succinyl-cyclohexa-2,4-diene-1-carboxylate + pyruvate. Its pathway is quinol/quinone metabolism; 1,4-dihydroxy-2-naphthoate biosynthesis; 1,4-dihydroxy-2-naphthoate from chorismate: step 3/7. It functions in the pathway quinol/quinone metabolism; menaquinone biosynthesis. Its function is as follows. Catalyzes a proton abstraction reaction that results in 2,5-elimination of pyruvate from 2-succinyl-5-enolpyruvyl-6-hydroxy-3-cyclohexene-1-carboxylate (SEPHCHC) and the formation of 2-succinyl-6-hydroxy-2,4-cyclohexadiene-1-carboxylate (SHCHC). The protein is 2-succinyl-6-hydroxy-2,4-cyclohexadiene-1-carboxylate synthase of Escherichia coli (strain SE11).